A 291-amino-acid polypeptide reads, in one-letter code: N-acetylmannosamine kinase (291 aa).

ATP contacts are provided by residues 5–12 and 132–139; these read AIDIGGTK and GVGGGVVS. Residues histidine 156, cysteine 166, cysteine 168, and cysteine 173 each coordinate Zn(2+).

It belongs to the ROK (NagC/XylR) family. NanK subfamily. As to quaternary structure, homodimer.

The catalysed reaction is an N-acyl-D-mannosamine + ATP = an N-acyl-D-mannosamine 6-phosphate + ADP + H(+). The protein operates within amino-sugar metabolism; N-acetylneuraminate degradation; D-fructose 6-phosphate from N-acetylneuraminate: step 2/5. Functionally, catalyzes the phosphorylation of N-acetylmannosamine (ManNAc) to ManNAc-6-P. This Escherichia fergusonii (strain ATCC 35469 / DSM 13698 / CCUG 18766 / IAM 14443 / JCM 21226 / LMG 7866 / NBRC 102419 / NCTC 12128 / CDC 0568-73) protein is N-acetylmannosamine kinase.